Here is a 462-residue protein sequence, read N- to C-terminus: Phosphoglucosamine mutase (462 aa).

Residue serine 111 is the Phosphoserine intermediate of the active site. Mg(2+) is bound by residues serine 111, aspartate 250, aspartate 252, and aspartate 254. Serine 111 bears the Phosphoserine mark.

The protein belongs to the phosphohexose mutase family. It depends on Mg(2+) as a cofactor. In terms of processing, activated by phosphorylation.

It catalyses the reaction alpha-D-glucosamine 1-phosphate = D-glucosamine 6-phosphate. In terms of biological role, catalyzes the conversion of glucosamine-6-phosphate to glucosamine-1-phosphate. The chain is Phosphoglucosamine mutase from Synechococcus sp. (strain WH7803).